The sequence spans 175 residues: ATP-dependent protease subunit HslV (175 aa).

The active site involves threonine 2. Residues glycine 158, cysteine 161, and threonine 164 each coordinate Na(+).

Belongs to the peptidase T1B family. HslV subfamily. A double ring-shaped homohexamer of HslV is capped on each side by a ring-shaped HslU homohexamer. The assembly of the HslU/HslV complex is dependent on binding of ATP.

The protein resides in the cytoplasm. The enzyme catalyses ATP-dependent cleavage of peptide bonds with broad specificity.. With respect to regulation, allosterically activated by HslU binding. Functionally, protease subunit of a proteasome-like degradation complex believed to be a general protein degrading machinery. In Haemophilus influenzae (strain PittEE), this protein is ATP-dependent protease subunit HslV.